We begin with the raw amino-acid sequence, 218 residues long: Large ribosomal subunit protein uL3c (218 aa).

The disordered stretch occupies residues 127–161; that stretch reads GFSRGPMTHGSKNHREPGSTGAGTTPGRIYPGKRM.

This sequence belongs to the universal ribosomal protein uL3 family. In terms of assembly, part of the 50S ribosomal subunit.

Its subcellular location is the plastid. It localises to the organellar chromatophore. Its function is as follows. One of the primary rRNA binding proteins, it binds directly near the 3'-end of the 23S rRNA, where it nucleates assembly of the 50S subunit. The polypeptide is Large ribosomal subunit protein uL3c (rpl3) (Paulinella chromatophora).